The primary structure comprises 457 residues: Peptidyl-prolyl cis-trans isomerase FKBP5 (457 aa).

Met-1 bears the N-acetylmethionine mark. The disordered stretch occupies residues Met-1–Thr-26. At Ser-13 the chain carries Phosphoserine. Lys-28 bears the N6-acetyllysine mark. The PPIase FKBP-type 1 domain occupies Gly-50–Lys-138. Lys-155 carries the N6-acetyllysine modification. The PPIase FKBP-type 2 domain occupies Gly-165–Glu-251. TPR repeat units follow at residues Ala-268–Glu-301, Leu-317–Asn-350, and Glu-351–Asn-384. The disordered stretch occupies residues Ala-421 to Val-457. Position 445 is a phosphoserine (Ser-445).

In terms of assembly, part of a heteromultimeric cytoplasmic complex with HSP90AA1, HSPA1A/HSPA1B and steroid receptors. Upon ligand binding dissociates from the complex and FKBP4 takes its place. Interacts with functionally mature heterooligomeric progesterone receptor complexes along with HSP90 and TEBP. Interacts with NR3C1. Interacts with Akt/AKT1 and PHLPP1; enhancing dephosphorylation and subsequent activation of Akt/AKT1. Interacts with IFI44L; this interaction modulates the kinase activity of IKBKB and IKBKE. Interacts with IKBKB and IKBKE. Post-translationally, acetylation impairs ability to promote interaction between Akt/AKT1 and PHLPP1. Deacetylation by SIRT7 promotes interaction between Akt/AKT1 and PHLPP1, leading to suppress Akt/AKT1 activation. Ubiquitinated, leading to degradation in a proteasome-dependent manner. Deubiquitinated by USP49, leading to stabilization.

Its subcellular location is the cytoplasm. It is found in the nucleus. The catalysed reaction is [protein]-peptidylproline (omega=180) = [protein]-peptidylproline (omega=0). Its activity is regulated as follows. Inhibited by both FK506 and rapamycin. Immunophilin protein with PPIase and co-chaperone activities. Component of unligated steroid receptors heterocomplexes through interaction with heat-shock protein 90 (HSP90). Plays a role in the intracellular trafficking of heterooligomeric forms of steroid hormone receptors maintaining the complex into the cytoplasm when unliganded. Acts as a regulator of Akt/AKT1 activity by promoting the interaction between Akt/AKT1 and PHLPP1, thereby enhancing dephosphorylation and subsequent activation of Akt/AKT1. Interacts with IKBKE and IKBKB which facilitates IKK complex assembly leading to increased IKBKE and IKBKB kinase activity, NF-kappaB activation, and IFN production. The sequence is that of Peptidyl-prolyl cis-trans isomerase FKBP5 (FKBP5) from Chlorocebus aethiops (Green monkey).